A 901-amino-acid polypeptide reads, in one-letter code: Protein translocase subunit SecA (901 aa).

ATP contacts are provided by residues Q89, 107 to 111 (GEGKT), and D502. Residues C884, C886, C895, and H896 each coordinate Zn(2+).

Belongs to the SecA family. In terms of assembly, monomer and homodimer. Part of the essential Sec protein translocation apparatus which comprises SecA, SecYEG and auxiliary proteins SecDF-YajC and YidC. Zn(2+) is required as a cofactor.

Its subcellular location is the cell inner membrane. It is found in the cytoplasm. The enzyme catalyses ATP + H2O + cellular proteinSide 1 = ADP + phosphate + cellular proteinSide 2.. In terms of biological role, part of the Sec protein translocase complex. Interacts with the SecYEG preprotein conducting channel. Has a central role in coupling the hydrolysis of ATP to the transfer of proteins into and across the cell membrane, serving both as a receptor for the preprotein-SecB complex and as an ATP-driven molecular motor driving the stepwise translocation of polypeptide chains across the membrane. The sequence is that of Protein translocase subunit SecA from Sinorhizobium fredii (strain NBRC 101917 / NGR234).